Reading from the N-terminus, the 489-residue chain is tRNA(Ile)-lysidine synthase (489 aa).

35 to 40 provides a ligand contact to ATP; sequence SGGLDS.

Belongs to the tRNA(Ile)-lysidine synthase family.

The protein localises to the cytoplasm. The enzyme catalyses cytidine(34) in tRNA(Ile2) + L-lysine + ATP = lysidine(34) in tRNA(Ile2) + AMP + diphosphate + H(+). In terms of biological role, ligates lysine onto the cytidine present at position 34 of the AUA codon-specific tRNA(Ile) that contains the anticodon CAU, in an ATP-dependent manner. Cytidine is converted to lysidine, thus changing the amino acid specificity of the tRNA from methionine to isoleucine. The chain is tRNA(Ile)-lysidine synthase from Burkholderia mallei (strain ATCC 23344).